The primary structure comprises 186 residues: Ribosome-recycling factor (186 aa).

Positions 144 to 163 (EKDGVIGQDESRAQSERVQK) are disordered.

This sequence belongs to the RRF family.

It localises to the cytoplasm. Functionally, responsible for the release of ribosomes from messenger RNA at the termination of protein biosynthesis. May increase the efficiency of translation by recycling ribosomes from one round of translation to another. In Rhizobium johnstonii (strain DSM 114642 / LMG 32736 / 3841) (Rhizobium leguminosarum bv. viciae), this protein is Ribosome-recycling factor.